We begin with the raw amino-acid sequence, 600 residues long: Probable methyltransferase PMT21 (600 aa).

The Cytoplasmic segment spans residues 1–16 (MKYKDEKYEKAEKGSR). Residues 17-37 (ILPKTVLLILLCGLSFYLGGL) traverse the membrane as a helical; Signal-anchor for type II membrane protein segment. Residues 38–600 (YCGKNIIEVS…YSSNASSETN (563 aa)) lie on the Lumenal side of the membrane. The N-linked (GlcNAc...) asparagine glycan is linked to Asn-594.

This sequence belongs to the methyltransferase superfamily.

The protein resides in the endoplasmic reticulum membrane. This is Probable methyltransferase PMT21 (ERD3) from Arabidopsis thaliana (Mouse-ear cress).